The following is a 127-amino-acid chain: Arginine decarboxylase proenzyme (127 aa).

Residue serine 72 is the Schiff-base intermediate with substrate; via pyruvic acid of the active site. Serine 72 is subject to Pyruvic acid (Ser); by autocatalysis. Histidine 77 (proton acceptor; for processing activity) is an active-site residue. The active-site Proton donor; for catalytic activity is the cysteine 92.

This sequence belongs to the prokaryotic AdoMetDC family. Type 1 subfamily. Heterooctamer of four alpha and four beta chains arranged as a tetramer of alpha/beta heterodimers. Requires pyruvate as cofactor. In terms of processing, is synthesized initially as an inactive proenzyme. Formation of the active enzyme involves a self-maturation process in which the active site pyruvoyl group is generated from an internal serine residue via an autocatalytic post-translational modification. Two non-identical subunits are generated from the proenzyme in this reaction, and the pyruvate is formed at the N-terminus of the alpha chain, which is derived from the carboxyl end of the proenzyme. The post-translation cleavage follows an unusual pathway, termed non-hydrolytic serinolysis, in which the side chain hydroxyl group of the serine supplies its oxygen atom to form the C-terminus of the beta chain, while the remainder of the serine residue undergoes an oxidative deamination to produce ammonia and the pyruvoyl group blocking the N-terminus of the alpha chain.

The catalysed reaction is L-arginine + H(+) = agmatine + CO2. It participates in amine and polyamine biosynthesis; agmatine biosynthesis; agmatine from L-arginine: step 1/1. In terms of biological role, specifically catalyzes the decarboxylation of L-arginine to agmatine. Has no S-adenosylmethionine decarboxylase (AdoMetDC) activity. This chain is Arginine decarboxylase proenzyme, found in Staphylothermus marinus (strain ATCC 43588 / DSM 3639 / JCM 9404 / F1).